The following is a 383-amino-acid chain: Guanine nucleotide-binding protein alpha-1 subunit (383 aa).

Residues 1-20 (MGLLCSRSRHHTEDTDENTQ) form a disordered region. A lipid anchor (N-myristoyl glycine) is attached at G2. C5 carries S-palmitoyl cysteine lipidation. Residues 37–383 (HIRKLLLLGA…RRNLLEAGLL (347 aa)) form the G-alpha domain. The tract at residues 40 to 53 (KLLLLGAGESGKST) is G1 motif. The GTP site is built by E48, S49, G50, K51, S52, T53, D162, L187, Y188, T193, G221, N287, K288, D290, and A355. Residue S52 participates in Mg(2+) binding. The segment at 185–193 (DVLYARVRT) is G2 motif. A Mg(2+)-binding site is contributed by T193. A G3 motif region spans residues 214 to 223 (YRLFDVGGQR). The tract at residues 283 to 290 (MLFLNKFD) is G4 motif. Residues 353 to 358 (TTALDQ) form a G5 motif region.

It belongs to the G-alpha family. G proteins are composed of 3 units; alpha, beta and gamma. The alpha chain contains the guanine nucleotide binding site. Interacts with RGS1, THF1, the pirin protein PRN1, GTG1 and GTG2. Binds to GCR1. May interact with ADT3. No interactions with RACK1A, RACK1B or RACK1C. Interacts with PLDALPHA1. Interacts with CAND2/PMTR1. Requires Mg(2+) as cofactor. In terms of tissue distribution, more abundant in roots and/or leaves.

The protein resides in the cell membrane. Its function is as follows. Exhibits a fast rate of basal nucleotide exchange. Guanine nucleotide-binding proteins (G proteins) are involved as modulators or transducers in various transmembrane signaling systems. Together with GCR1, may regulate the cell cycle via a signaling cascade that uses phosphatidylinositol-specific phospholipase C (PI-PLC) as an effector and inositol 1,4,5-trisphosphate (IP(3)) as a second messenger. Promotes abscisic acid (ABA) responses in guard cells. Involved in the blue light (BL) signaling. Together with GCR1 and ADT3, required for BL-mediated synthesis of phenylpyruvate and subsequently of phenylalanine (Phe), in etiolated seedlings. Modulates root architecture (e.g. lateral root formation). Negatively regulated by RGS1. In collaboration with CAND2/PMTR1, regulates the melatonin-mediated stomatal closure involving H(2)O(2) and Ca(2+) signals. The polypeptide is Guanine nucleotide-binding protein alpha-1 subunit (Arabidopsis thaliana (Mouse-ear cress)).